The chain runs to 459 residues: Exodeoxyribonuclease 7 large subunit (459 aa).

It belongs to the XseA family. In terms of assembly, heterooligomer composed of large and small subunits.

Its subcellular location is the cytoplasm. It catalyses the reaction Exonucleolytic cleavage in either 5'- to 3'- or 3'- to 5'-direction to yield nucleoside 5'-phosphates.. Its function is as follows. Bidirectionally degrades single-stranded DNA into large acid-insoluble oligonucleotides, which are then degraded further into small acid-soluble oligonucleotides. In Pseudomonas entomophila (strain L48), this protein is Exodeoxyribonuclease 7 large subunit.